The chain runs to 148 residues: MIHAGTRPLRVLVTKIGLDGHDRGSRIVAAYLRDAGMEVIYTPPWQTIPGVVKLATEEDVDVIGISSLATDHLIVPKMMEALRAAGLGHVGVVVGGIVPEAEQSALAAAGVSRVFGPGAAREEIVECVTALGQKSRAERVDDYSEANP.

Residues 8-138 form the B12-binding domain; sequence PLRVLVTKIG…TALGQKSRAE (131 aa). Residue His-21 coordinates adenosylcob(III)alamin.

Belongs to the acyl-CoA mutase small subunit family. As to quaternary structure, monomer in the absence of the PCM large subunit. Weakly interacts with the PCM large subunit; an alpha(2)beta(2) stoichiometry seems to represent the active state of the enzyme. Requires adenosylcob(III)alamin as cofactor.

The catalysed reaction is 3-methylbutanoyl-CoA = 2,2-dimethylpropanoyl-CoA. Its function is as follows. Together with Xaut_5043, catalyzes the reversible isomerization between pivalyl-CoA and isovaleryl-CoA, using radical chemistry. Does not exhibit isobutyryl-CoA mutase (ICM) activity. This chain is Pivalyl-CoA mutase small subunit, found in Xanthobacter autotrophicus (strain ATCC BAA-1158 / Py2).